A 257-amino-acid chain; its full sequence is Hydroxyethylthiazole kinase (257 aa).

Residue Met-49 participates in substrate binding. Residues Arg-124 and Thr-170 each coordinate ATP. Gly-197 serves as a coordination point for substrate.

Belongs to the Thz kinase family. The cofactor is Mg(2+).

The catalysed reaction is 5-(2-hydroxyethyl)-4-methylthiazole + ATP = 4-methyl-5-(2-phosphooxyethyl)-thiazole + ADP + H(+). The protein operates within cofactor biosynthesis; thiamine diphosphate biosynthesis; 4-methyl-5-(2-phosphoethyl)-thiazole from 5-(2-hydroxyethyl)-4-methylthiazole: step 1/1. Catalyzes the phosphorylation of the hydroxyl group of 4-methyl-5-beta-hydroxyethylthiazole (THZ). This Klebsiella pneumoniae subsp. pneumoniae (strain ATCC 700721 / MGH 78578) protein is Hydroxyethylthiazole kinase.